Reading from the N-terminus, the 244-residue chain is Ferric aerobactin reductase IutB (244 aa).

[2Fe-2S] cluster-binding residues include Cys220, Cys221, Cys232, and Cys235.

Monomer. Requires [2Fe-2S] cluster as cofactor.

It is found in the cytoplasm. The catalysed reaction is 2 a Fe(II)-siderophore + NAD(+) + H(+) = 2 a Fe(III)-siderophore + NADH. The enzyme catalyses 2 a Fe(II)-siderophore + NADP(+) + H(+) = 2 a Fe(III)-siderophore + NADPH. Ferric-siderophore reductase involved in iron removal from the siderophores after their transport into the cell. Acts as a major ferric-aerobactin reductase catalyzing the reduction of Fe(3+)-aerobactin, a citrate-hydroxamate siderophore produced by other bacteria. Catalyzes reduction of Fe(3+)-vulnibactin, a catecholate siderophore synthesized by V.vulnificus, in the absence of VuuB. Catalyzes reduction of ferrioxamine B and Fe(3+)-vibriobactin in vitro. No activity with Fe(3+)-enterobactin. Catalyzes reduction of ferric chelating compound Fe(3+)-nitrilotriacetic acid (NTA) in the presence of NADH, NADPH or reduced glutathione (GSH) as its electron donor in vitro. Also catalyzes reduction of ferric chelating compounds Fe(3+)-citrate and Fe(3+)-EDTA as well as non-complexed FeCl3 in the presence of GSH as its electron donor in vitro. Highest activity with Fe(3+)-NTA as electron acceptor and GSH as donor. The polypeptide is Ferric aerobactin reductase IutB (Vibrio vulnificus).